The sequence spans 232 residues: MKIGIIGAMEEEVTLLRDKIENRQTITIGGSEIYTGQLHGVDVALLKSGIGKVAAATGATLLLERCQPDVIINTGSAGGLAPTLKVGDIVVSDEARYHDADVTAFGYEYGQLPGCPAGFKADDKLVAAAEDCIKALDLNAVRGLIVSGDAFINGSVALAKIRHNFPQAIAVEMEATAIAHVCHNFKVPFVVVRAISDVADQQSHLSFEEFLAVAARQSTLMVENLVQNLARG.

The Proton acceptor role is filled by E12. Substrate-binding positions include G78, I152, and 173-174 (ME). Residue D197 is the Proton donor of the active site.

Belongs to the PNP/UDP phosphorylase family. MtnN subfamily. In terms of assembly, homodimer.

The catalysed reaction is S-adenosyl-L-homocysteine + H2O = S-(5-deoxy-D-ribos-5-yl)-L-homocysteine + adenine. It carries out the reaction S-methyl-5'-thioadenosine + H2O = 5-(methylsulfanyl)-D-ribose + adenine. The enzyme catalyses 5'-deoxyadenosine + H2O = 5-deoxy-D-ribose + adenine. It participates in amino-acid biosynthesis; L-methionine biosynthesis via salvage pathway; S-methyl-5-thio-alpha-D-ribose 1-phosphate from S-methyl-5'-thioadenosine (hydrolase route): step 1/2. Catalyzes the irreversible cleavage of the glycosidic bond in both 5'-methylthioadenosine (MTA) and S-adenosylhomocysteine (SAH/AdoHcy) to adenine and the corresponding thioribose, 5'-methylthioribose and S-ribosylhomocysteine, respectively. Also cleaves 5'-deoxyadenosine, a toxic by-product of radical S-adenosylmethionine (SAM) enzymes, into 5-deoxyribose and adenine. Thus, is required for in vivo function of the radical SAM enzymes biotin synthase and lipoic acid synthase, that are inhibited by 5'-deoxyadenosine accumulation. This Klebsiella pneumoniae (strain 342) protein is 5'-methylthioadenosine/S-adenosylhomocysteine nucleosidase.